Here is a 735-residue protein sequence, read N- to C-terminus: Transcription factor RFX4 (735 aa).

The disordered stretch occupies residues 27–59 (NKRYSSHTSLGNVSNDENEEKENNRASKPHSTP). The span at 32–41 (SHTSLGNVSN) shows a compositional bias: polar residues. A DNA-binding region spans residues 44–126 (NEEKENNRAS…RRLGTRGQSK (83 aa)). Residues 61-136 (TLQWLEENYE…YHYYGIAVKE (76 aa)) constitute a DNA-binding region (RFX-type winged-helix). A necessary for dimerization region spans residues 315-487 (RFSQILRRQT…NELMRAMKGE (173 aa)). A disordered region spans residues 501–538 (EATPPTPSPGPSFSPAKSATSVEVPPPSSPVSNPSPEY).

This sequence belongs to the RFX family. As to quaternary structure, homodimer. Heterodimer with RFX2 and RFX3. Binds DNA. Interacts with GPS2. Isoform 1: Brain-specific. Isoform 2: Testis-specific. Isoform 1: Highly expressed in the suprachiasmatic nucleus, the central pacemaker site of the circadian clock (at protein level).

It is found in the nucleus. In terms of biological role, transcription factor that plays a role in early brain development. May activate transcription by interacting directly with the X-box. May activate transcription from CX3CL1 promoter through the X-box during brain development. May be required for neural tube ciliogenesis during embryogenesis. This chain is Transcription factor RFX4 (Rfx4), found in Mus musculus (Mouse).